Consider the following 1595-residue polypeptide: A disintegrin and metalloproteinase with thrombospondin motifs 7 (1595 aa).

The signal sequence occupies residues 1-20 (MHRGLNLLLILCALAPHVLG). A propeptide spanning residues 21–217 (PASGLPTEGR…QRQQKRRQQR (197 aa)) is cleaved from the precursor. 2 N-linked (GlcNAc...) asparagine glycosylation sites follow: Asn-84 and Asn-105. A disordered region spans residues 165 to 218 (PGHAQPHMVYKHKRSGQQDDSRTSGTCGVQGSPELKHQREHWEQRQQKRRQQRS). The short motif at 189-196 (GTCGVQGS) is the Cysteine switch element. Cys-191 is a Zn(2+) binding site. A compositionally biased stretch (basic and acidic residues) spans 198–210 (ELKHQREHWEQRQ). The Peptidase M12B domain occupies 223 to 434 (KWVETLVVAD…GWGLCLDDRP (212 aa)). Cystine bridges form between Cys-299–Cys-353, Cys-328–Cys-335, Cys-347–Cys-429, Cys-386–Cys-413, Cys-456–Cys-479, Cys-467–Cys-485, Cys-474–Cys-504, Cys-498–Cys-509, Cys-532–Cys-569, Cys-536–Cys-574, and Cys-547–Cys-559. Position 369 (His-369) interacts with Zn(2+). Residue Glu-370 is part of the active site. Residues His-373 and His-379 each coordinate Zn(2+). In terms of domain architecture, Disintegrin spans 444-519 (VLPGVLYDVN…VPEGFQPETV (76 aa)). The 56-residue stretch at 520 to 575 (DGGWSGWSAWSVCSRSCGVGVRSSERQCTQPVPKNKGKYCVGERKRYRLCNLQACP) folds into the TSP type-1 1 domain. An N-linked (GlcNAc...) asparagine glycan is attached at Asn-619. The interval 680–791 (HTVSRTFKEA…PGVHYKYTIQ (112 aa)) is spacer. 3 consecutive TSP type-1 domains span residues 801–860 (PEFS…EPCP), 861–917 (ARWW…IPCY), and 922–975 (CPSS…QPCQ). Disordered regions lie at residues 989 to 1035 (GSSS…LDPP), 1077 to 1121 (PPHI…SHSP), 1179 to 1234 (REDT…LSPD), and 1255 to 1315 (KPVH…APTD). Pro residues-rich tracts occupy residues 1005-1015 (QPVPRPSPASS) and 1079-1089 (HIRPTEPPSDS). Residues 1220 to 1232 (SSPSNSTTQASLS) are compositionally biased toward low complexity. Polar residues predominate over residues 1268–1280 (QIQTPHTEGTQSP). 4 consecutive TSP type-1 domains span residues 1320 to 1368 (KNAS…RHCH), 1371 to 1431 (PCAA…QPCL), 1433 to 1476 (WYTS…PCNT), and 1478 to 1538 (PCTQ…EDCE). Positions 1541 to 1581 (EPSRCERDRLPFNFCETLRLLGRCQLPTIRAQCCRSCPPLS) constitute a PLAC domain.

In terms of assembly, interacts with COMP. Zn(2+) serves as cofactor. Post-translationally, glycosylated. Can be O-fucosylated by POFUT2 on a serine or a threonine residue found within the consensus sequence C1-X(2)-(S/T)-C2-G of the TSP type-1 repeat domains where C1 and C2 are the first and second cysteine residue of the repeat, respectively. Fucosylated repeats can then be further glycosylated by the addition of a beta-1,3-glucose residue by the glucosyltransferase, B3GALTL. Fucosylation mediates the efficient secretion of ADAMTS family members. Can also be C-glycosylated with one or two mannose molecules on tryptophan residues within the consensus sequence W-X-X-W of the TPRs. N- and C-glycosylations can also facilitate secretion. In terms of processing, O-glycosylated proteoglycan; contains chondroitin sulfate. May be cleaved by a furin endopeptidase. The precursor is sequentially processed. In terms of tissue distribution, detected in liver, ovary, kidney, testicle, lung and embryo.

It localises to the secreted. It is found in the extracellular space. The protein resides in the extracellular matrix. Metalloprotease. Was previously shown to degrade COMP. However, a later study found no activity against COMP. In Rattus norvegicus (Rat), this protein is A disintegrin and metalloproteinase with thrombospondin motifs 7 (Adamts7).